Here is a 205-residue protein sequence, read N- to C-terminus: Large ribosomal subunit protein uL4 (205 aa).

Belongs to the universal ribosomal protein uL4 family. As to quaternary structure, part of the 50S ribosomal subunit.

One of the primary rRNA binding proteins, this protein initially binds near the 5'-end of the 23S rRNA. It is important during the early stages of 50S assembly. It makes multiple contacts with different domains of the 23S rRNA in the assembled 50S subunit and ribosome. Functionally, forms part of the polypeptide exit tunnel. In Thermus thermophilus (strain ATCC BAA-163 / DSM 7039 / HB27), this protein is Large ribosomal subunit protein uL4.